A 251-amino-acid chain; its full sequence is Ubiquinone/menaquinone biosynthesis C-methyltransferase UbiE (251 aa).

Residues Thr74, Asp95, Asn123–Ala124, and Ser140 contribute to the S-adenosyl-L-methionine site.

The protein belongs to the class I-like SAM-binding methyltransferase superfamily. MenG/UbiE family.

It catalyses the reaction a 2-demethylmenaquinol + S-adenosyl-L-methionine = a menaquinol + S-adenosyl-L-homocysteine + H(+). It carries out the reaction a 2-methoxy-6-(all-trans-polyprenyl)benzene-1,4-diol + S-adenosyl-L-methionine = a 5-methoxy-2-methyl-3-(all-trans-polyprenyl)benzene-1,4-diol + S-adenosyl-L-homocysteine + H(+). It participates in quinol/quinone metabolism; menaquinone biosynthesis; menaquinol from 1,4-dihydroxy-2-naphthoate: step 2/2. Its pathway is cofactor biosynthesis; ubiquinone biosynthesis. Methyltransferase required for the conversion of demethylmenaquinol (DMKH2) to menaquinol (MKH2) and the conversion of 2-polyprenyl-6-methoxy-1,4-benzoquinol (DDMQH2) to 2-polyprenyl-3-methyl-6-methoxy-1,4-benzoquinol (DMQH2). The polypeptide is Ubiquinone/menaquinone biosynthesis C-methyltransferase UbiE (Escherichia coli O9:H4 (strain HS)).